The following is an 88-amino-acid chain: Beta-insect excitatory toxin BmKIT1 (88 aa).

The signal sequence occupies residues 1–18 (MKFFLIFLVIFPIMGVLG). An LCN-type CS-alpha/beta domain is found at 20–83 (KNGYAVDSSG…IKDATKSYCD (64 aa)). 4 disulfide bridges follow: C34–C55, C40–C60, C44–C62, and C56–C82. I87 is subject to Isoleucine amide.

This sequence belongs to the long (4 C-C) scorpion toxin superfamily. Sodium channel inhibitor family. Beta subfamily. In terms of tissue distribution, expressed by the venom gland.

It localises to the secreted. Excitatory insect beta-toxins induce a spastic paralysis. They bind voltage-independently at site-4 of sodium channels (Nav) and shift the voltage of activation toward more negative potentials thereby affecting sodium channel activation and promoting spontaneous and repetitive firing. This toxin is active only on insects. The protein is Beta-insect excitatory toxin BmKIT1 of Olivierus martensii (Manchurian scorpion).